Reading from the N-terminus, the 240-residue chain is Lipoprotein-releasing system ATP-binding protein LolD (240 aa).

The region spanning Ile-15–Val-240 is the ABC transporter domain. Position 51–58 (Gly-51–Ser-58) interacts with ATP.

It belongs to the ABC transporter superfamily. Lipoprotein translocase (TC 3.A.1.125) family. In terms of assembly, the complex is composed of two ATP-binding proteins (LolD) and two transmembrane proteins (LolC and LolE).

It localises to the cell inner membrane. In terms of biological role, part of the ABC transporter complex LolCDE involved in the translocation of mature outer membrane-directed lipoproteins, from the inner membrane to the periplasmic chaperone, LolA. Responsible for the formation of the LolA-lipoprotein complex in an ATP-dependent manner. The polypeptide is Lipoprotein-releasing system ATP-binding protein LolD (Xylella fastidiosa (strain 9a5c)).